The chain runs to 266 residues: Glucosamine-6-phosphate deaminase (266 aa).

Asp-72 functions as the Proton acceptor; for enolization step in the catalytic mechanism. Catalysis depends on Asp-141, which acts as the For ring-opening step. His-143 acts as the Proton acceptor; for ring-opening step in catalysis. Glu-148 serves as the catalytic For ring-opening step.

This sequence belongs to the glucosamine/galactosamine-6-phosphate isomerase family. NagB subfamily. In terms of assembly, homohexamer; trimer of disulfide-linked dimers.

It carries out the reaction alpha-D-glucosamine 6-phosphate + H2O = beta-D-fructose 6-phosphate + NH4(+). The protein operates within amino-sugar metabolism; N-acetylneuraminate degradation; D-fructose 6-phosphate from N-acetylneuraminate: step 5/5. Its activity is regulated as follows. Allosterically activated by N-acetylglucosamine 6-phosphate (GlcNAc6P). In terms of biological role, catalyzes the reversible isomerization-deamination of glucosamine 6-phosphate (GlcN6P) to form fructose 6-phosphate (Fru6P) and ammonium ion. This Shigella dysenteriae serotype 1 (strain Sd197) protein is Glucosamine-6-phosphate deaminase.